A 582-amino-acid chain; its full sequence is Zinc finger protein somi-1 (582 aa).

Disordered regions lie at residues 179–251 (LRPE…NNTD) and 352–377 (SAEPMKRHRVEAHEKQSPKKKVKKEQ). The segment covering 188–226 (TQKSTNGVHRSTSNSSAETLRNNSVSAATVSPSDDNSLN) has biased composition (polar residues). Low complexity predominate over residues 227–244 (SPALTSSGSAGSGTPPLG). Over residues 352–368 (SAEPMKRHRVEAHEKQS) the composition is skewed to basic and acidic residues. The C2H2-type; Degenerate zinc finger occupies 454-477 (YICEDCDFVTVYKGNMKRHLNTCH). Positions 513 to 582 (AHKANSSRGR…PPPPPPPMLL (70 aa)) are disordered. The span at 551–570 (LLESLASSSSSMGGYSNGNN) shows a compositional bias: low complexity. Positions 572 to 582 (QPPPPPPPMLL) are enriched in pro residues.

As to quaternary structure, may interact with swsn-9; the interaction promotes hypodermal differentiation. Expressed in hypodermal seam cells, the somatic gonad and vulval precursor cells, body wall muscle and head neurons.

It is found in the nucleus. In terms of biological role, DNA-binding protein which binds to the promoters of let-60, lin-14 and lin-28, possibly to regulate genes involved in hypodermal and vulval development. Together with miRNAs mir-84 and let-7 may direct terminal differentiation of the seam cells, exit from the molting cycle, and vulva formation. Does not regulate the expression of mir-84. May promote hypodermal differentiation in association with swsn-9, a component of SWI/SNF chromatin remodeling complexes. The sequence is that of Zinc finger protein somi-1 from Caenorhabditis elegans.